Reading from the N-terminus, the 138-residue chain is ATP synthase epsilon chain (138 aa).

The protein belongs to the ATPase epsilon chain family. As to quaternary structure, F-type ATPases have 2 components, CF(1) - the catalytic core - and CF(0) - the membrane proton channel. CF(1) has five subunits: alpha(3), beta(3), gamma(1), delta(1), epsilon(1). CF(0) has three main subunits: a, b and c.

It localises to the cell inner membrane. In terms of biological role, produces ATP from ADP in the presence of a proton gradient across the membrane. The protein is ATP synthase epsilon chain of Polaromonas naphthalenivorans (strain CJ2).